An 81-amino-acid polypeptide reads, in one-letter code: Cytochrome b559 subunit alpha (81 aa).

A helical membrane pass occupies residues 21 to 35; the sequence is VIHSITIPMLFVAGW. His23 contacts heme.

Belongs to the PsbE/PsbF family. Heterodimer of an alpha subunit and a beta subunit. PSII is composed of 1 copy each of membrane proteins PsbA, PsbB, PsbC, PsbD, PsbE, PsbF, PsbH, PsbI, PsbJ, PsbK, PsbL, PsbM, PsbT, PsbX, PsbY, PsbZ, Psb30/Ycf12, peripheral proteins PsbO, CyanoQ (PsbQ), PsbU, PsbV and a large number of cofactors. It forms dimeric complexes. Requires heme b as cofactor.

It is found in the cellular thylakoid membrane. Its function is as follows. This b-type cytochrome is tightly associated with the reaction center of photosystem II (PSII). PSII is a light-driven water:plastoquinone oxidoreductase that uses light energy to abstract electrons from H(2)O, generating O(2) and a proton gradient subsequently used for ATP formation. It consists of a core antenna complex that captures photons, and an electron transfer chain that converts photonic excitation into a charge separation. The chain is Cytochrome b559 subunit alpha from Gloeothece citriformis (strain PCC 7424) (Cyanothece sp. (strain PCC 7424)).